Consider the following 1354-residue polypeptide: Ubiquitin carboxyl-terminal hydrolase 47 (1354 aa).

Positions 114-133 (EQPQLASDESGTADSSGLDD) are enriched in polar residues. Residues 114 to 139 (EQPQLASDESGTADSSGLDDSTQEKF) are disordered. The USP domain maps to 174 to 549 (VGLVNQAMTC…NAYMLMYRLK (376 aa)). Cys-183 acts as the Nucleophile in catalysis. The interval 408-438 (DVEDEKSPQTDSCTDSGAENEGSCHSDQMSN) is disordered. Polar residues predominate over residues 416–438 (QTDSCTDSGAENEGSCHSDQMSN). The active-site Proton acceptor is the His-488. Over residues 863 to 882 (LSLQQHQDGGNGDSSKSTEG) the composition is skewed to polar residues. Disordered stretches follow at residues 863-1004 (LSLQ…ESGK) and 1314-1335 (LAKK…SPRK). Residues 920–930 (PEERSDSDVNN) show a composition bias toward basic and acidic residues. Low complexity predominate over residues 933–949 (STSSVDSDILSSSHSSD). A compositionally biased stretch (basic and acidic residues) spans 977 to 986 (KANDGKKETW). Residues 987–1000 (DTAEEDSGTDSEYD) are compositionally biased toward acidic residues.

This sequence belongs to the peptidase C19 family. USP47 subfamily.

Its subcellular location is the cytoplasm. It catalyses the reaction Thiol-dependent hydrolysis of ester, thioester, amide, peptide and isopeptide bonds formed by the C-terminal Gly of ubiquitin (a 76-residue protein attached to proteins as an intracellular targeting signal).. Ubiquitin-specific protease that specifically deubiquitinates monoubiquitinated DNA polymerase beta (polb), stabilizing polb thereby playing a role in base-excision repair (BER). This chain is Ubiquitin carboxyl-terminal hydrolase 47 (usp47), found in Xenopus tropicalis (Western clawed frog).